Reading from the N-terminus, the 805-residue chain is DNA gyrase subunit B (805 aa).

In terms of domain architecture, Toprim spans 431–546 (CEMYIVEGDS…NECVYIAQPP (116 aa)). Residues glutamate 437, aspartate 511, and aspartate 513 each contribute to the Mg(2+) site.

This sequence belongs to the type II topoisomerase GyrB family. As to quaternary structure, heterotetramer, composed of two GyrA and two GyrB chains. In the heterotetramer, GyrA contains the active site tyrosine that forms a transient covalent intermediate with DNA, while GyrB binds cofactors and catalyzes ATP hydrolysis. The cofactor is Mg(2+). Mn(2+) is required as a cofactor. Requires Ca(2+) as cofactor.

It is found in the cytoplasm. The enzyme catalyses ATP-dependent breakage, passage and rejoining of double-stranded DNA.. Its function is as follows. A type II topoisomerase that negatively supercoils closed circular double-stranded (ds) DNA in an ATP-dependent manner to modulate DNA topology and maintain chromosomes in an underwound state. Negative supercoiling favors strand separation, and DNA replication, transcription, recombination and repair, all of which involve strand separation. Also able to catalyze the interconversion of other topological isomers of dsDNA rings, including catenanes and knotted rings. Type II topoisomerases break and join 2 DNA strands simultaneously in an ATP-dependent manner. In Chlamydia pneumoniae (Chlamydophila pneumoniae), this protein is DNA gyrase subunit B.